Consider the following 319-residue polypeptide: ATP-dependent 6-phosphofructokinase (319 aa).

G11 serves as a coordination point for ATP. 21-25 contributes to the ADP binding site; sequence RAVVR. ATP contacts are provided by residues 72–73 and 102–105; these read RC and GDGS. D103 is a Mg(2+) binding site. 125–127 contributes to the substrate binding site; that stretch reads TID. Residue D127 is the Proton acceptor of the active site. Residue R154 coordinates ADP. Substrate-binding positions include R162 and 169-171; that span reads MGR. Residues 185 to 187, R211, and 213 to 215 contribute to the ADP site; these read GAE and KKH. Substrate is bound by residues E222, R243, and 249–252; that span reads HIQR.

This sequence belongs to the phosphofructokinase type A (PFKA) family. ATP-dependent PFK group I subfamily. Prokaryotic clade 'B1' sub-subfamily. In terms of assembly, homotetramer. Requires Mg(2+) as cofactor.

The protein localises to the cytoplasm. The enzyme catalyses beta-D-fructose 6-phosphate + ATP = beta-D-fructose 1,6-bisphosphate + ADP + H(+). Its pathway is carbohydrate degradation; glycolysis; D-glyceraldehyde 3-phosphate and glycerone phosphate from D-glucose: step 3/4. Its activity is regulated as follows. Allosterically activated by ADP and other diphosphonucleosides, and allosterically inhibited by phosphoenolpyruvate. Functionally, catalyzes the phosphorylation of D-fructose 6-phosphate to fructose 1,6-bisphosphate by ATP, the first committing step of glycolysis. The chain is ATP-dependent 6-phosphofructokinase from Bacillus velezensis (strain DSM 23117 / BGSC 10A6 / LMG 26770 / FZB42) (Bacillus amyloliquefaciens subsp. plantarum).